Reading from the N-terminus, the 192-residue chain is Crossover junction endodeoxyribonuclease RuvC (192 aa).

Catalysis depends on residues D20, E80, and D153. Residues D20, E80, and D153 each coordinate Mg(2+).

This sequence belongs to the RuvC family. In terms of assembly, homodimer which binds Holliday junction (HJ) DNA. The HJ becomes 2-fold symmetrical on binding to RuvC with unstacked arms; it has a different conformation from HJ DNA in complex with RuvA. In the full resolvosome a probable DNA-RuvA(4)-RuvB(12)-RuvC(2) complex forms which resolves the HJ. Mg(2+) serves as cofactor.

The protein localises to the cytoplasm. It carries out the reaction Endonucleolytic cleavage at a junction such as a reciprocal single-stranded crossover between two homologous DNA duplexes (Holliday junction).. Its function is as follows. The RuvA-RuvB-RuvC complex processes Holliday junction (HJ) DNA during genetic recombination and DNA repair. Endonuclease that resolves HJ intermediates. Cleaves cruciform DNA by making single-stranded nicks across the HJ at symmetrical positions within the homologous arms, yielding a 5'-phosphate and a 3'-hydroxyl group; requires a central core of homology in the junction. The consensus cleavage sequence is 5'-(A/T)TT(C/G)-3'. Cleavage occurs on the 3'-side of the TT dinucleotide at the point of strand exchange. HJ branch migration catalyzed by RuvA-RuvB allows RuvC to scan DNA until it finds its consensus sequence, where it cleaves and resolves the cruciform DNA. This Christiangramia forsetii (strain DSM 17595 / CGMCC 1.15422 / KT0803) (Gramella forsetii) protein is Crossover junction endodeoxyribonuclease RuvC.